A 530-amino-acid polypeptide reads, in one-letter code: UDP-glucuronosyltransferase 2B15 (530 aa).

The first 23 residues, 1 to 23 (MSLKWTSVFLLIQLSCYFSSGSC), serve as a signal peptide directing secretion. Asn-65 is a glycosylation site (N-linked (GlcNAc...) asparagine). Position 136 is an N6-succinyllysine (Lys-136). N-linked (GlcNAc...) asparagine glycosylation is found at Asn-316 and Asn-483. The chain crosses the membrane as a helical span at residues 495-515 (IAFLLACVATVIFIITKFCLF).

It belongs to the UDP-glycosyltransferase family. As to expression, expressed in many tissues. Present in liver, prostate and testis.

Its subcellular location is the endoplasmic reticulum membrane. It catalyses the reaction glucuronate acceptor + UDP-alpha-D-glucuronate = acceptor beta-D-glucuronoside + UDP + H(+). It carries out the reaction 17alpha-estradiol + UDP-alpha-D-glucuronate = 17alpha-estradiol 3-O-(beta-D-glucuronate) + UDP + H(+). The enzyme catalyses 16alpha,17alpha-estriol + UDP-alpha-D-glucuronate = 16alpha,17alpha-estriol 3-O-(beta-D-glucuronate) + UDP + H(+). The catalysed reaction is 17beta-hydroxy-5alpha-androstan-3-one + UDP-alpha-D-glucuronate = 5alpha-dihydrotestosterone 17-O-(beta-D-glucuronate) + UDP + H(+). In terms of biological role, UDP-glucuronosyltransferase (UGT) that catalyzes phase II biotransformation reactions in which lipophilic substrates are conjugated with glucuronic acid to increase the metabolite's water solubility, thereby facilitating excretion into either the urine or bile. Essential for the elimination and detoxification of drugs, xenobiotics and endogenous compounds. Catalyzes the glucuronidation of endogenous steroid hormones such as androgens (testosterone, androsterone) and estrogens (estradiol, epiestradiol, estriol, catechol estrogens). Displays glucuronidation activity toward several classes of xenobiotic substrates, including phenolic compounds (eugenol, 4-nitrophenol, 4-hydroxybiphenyl) and phenylpropanoids (naringenin, coumarins). Catalyzes the glucuronidation of monoterpenoid alcohols such as borneol, menthol and isomenthol, a class of natural compounds used in essential oils. This Homo sapiens (Human) protein is UDP-glucuronosyltransferase 2B15.